Reading from the N-terminus, the 1111-residue chain is Cell death abnormality protein 1 (1111 aa).

Residues methionine 1–threonine 18 form the signal peptide. At arginine 19–threonine 910 the chain is on the extracellular side. An EMI domain is found at glycine 41 to lysine 113. Intrachain disulfides connect cysteine 45/cysteine 106, cysteine 71/cysteine 80, cysteine 105/cysteine 117, cysteine 121/cysteine 130, cysteine 125/cysteine 136, cysteine 138/cysteine 147, cysteine 160/cysteine 172, cysteine 166/cysteine 179, cysteine 181/cysteine 190, cysteine 203/cysteine 215, cysteine 209/cysteine 221, cysteine 223/cysteine 232, cysteine 245/cysteine 257, cysteine 251/cysteine 264, and cysteine 266/cysteine 275. N-linked (GlcNAc...) asparagine glycosylation occurs at asparagine 66. EGF-like domains follow at residues leucine 118–alanine 148, tryptophan 156–glutamate 191, tryptophan 199–leucine 233, and phenylalanine 241–glutamate 276. N-linked (GlcNAc...) asparagine glycosylation is found at asparagine 333 and asparagine 345. Residues tyrosine 421 to serine 458 form the EGF-like 5 domain. 3 disulfides stabilise this stretch: cysteine 425–cysteine 439, cysteine 431–cysteine 446, and cysteine 448–cysteine 457. Asparagine 456 carries N-linked (GlcNAc...) asparagine glycosylation. The stretch at aspartate 629–serine 680 is one FU repeat. Residues tyrosine 681–serine 716 form the EGF-like 6 domain. 3 disulfide bridges follow: cysteine 685–cysteine 697, cysteine 691–cysteine 704, and cysteine 706–cysteine 715. Residues tryptophan 911–tyrosine 931 form a helical membrane-spanning segment. The interaction with trim-21 stretch occupies residues tyrosine 931–histidine 1007. Residues arginine 932–threonine 1111 lie on the Cytoplasmic side of the membrane. 2 disordered regions span residues aspartate 940–leucine 993 and isoleucine 1006–threonine 1111. The short motif at asparagine 962 to tyrosine 965 is the NPXY element. A compositionally biased stretch (polar residues) spans proline 963–glutamate 980. The residue at position 1019 (tyrosine 1019) is a Phosphotyrosine; by SRC. Positions tyrosine 1019–leucine 1022 match the YXXL motif. Residues serine 1030–serine 1039 are compositionally biased toward low complexity. Polar residues predominate over residues asparagine 1068 to glutamate 1083.

Interacts (via C-terminus) with ced-6 (via PTB domain). Interacts with nck-1; the interaction is required for ced-1 degradation through the proteasome pathway. Interacts with V-ATPase vha-10. In terms of processing, phosphorylation of Tyr-1019, within the YXXL motif, by src-1 is thought to initiate phagosomal formation. Post-translationally, 'Lys-48'-linked polyubiquitination by trim-21 leads to proteasomal degradation. As to expression, expressed in engulfing cells and syncytium hypodermal cells. Ced-7 is necessary for clustering around cell corpses prior to engulfment.

The protein localises to the cell membrane. The protein resides in the cytoplasmic vesicle. It is found in the phagosome membrane. Functionally, involved in programmed cell death, also called apoptosis, in both somatic and germ cells. Acts by recruiting ced-6 to phagosomes which enables actin-dependent cytoskeletal reorganization and subsequent engulfment of the apoptotic cell corpse. Has a role in the association of ppk-3 and rab-7 with the phagosomal surface which is necessary for the incorporation of lysosomes to phagosomes during phagosome maturation. Activates the expression of unfolded protein response genes, which are involved in the immune response to live bacteria. This Caenorhabditis elegans protein is Cell death abnormality protein 1.